Here is a 135-residue protein sequence, read N- to C-terminus: UPF0355 protein SH2586 (135 aa).

The interval 105–135 (NSSHDEVEENNSAYEEIDITHYANESKGPKS) is disordered.

This sequence belongs to the UPF0355 family.

The chain is UPF0355 protein SH2586 from Staphylococcus haemolyticus (strain JCSC1435).